Consider the following 219-residue polypeptide: Ribose-5-phosphate isomerase A (219 aa).

Residues 28 to 31 (SGST), 81 to 84 (DGAD), and 94 to 97 (KGGG) each bind substrate. Glu-103 serves as the catalytic Proton acceptor. A substrate-binding site is contributed by Lys-121.

The protein belongs to the ribose 5-phosphate isomerase family. As to quaternary structure, homodimer.

The enzyme catalyses aldehydo-D-ribose 5-phosphate = D-ribulose 5-phosphate. The protein operates within carbohydrate degradation; pentose phosphate pathway; D-ribose 5-phosphate from D-ribulose 5-phosphate (non-oxidative stage): step 1/1. Its function is as follows. Catalyzes the reversible conversion of ribose-5-phosphate to ribulose 5-phosphate. In Actinobacillus pleuropneumoniae serotype 5b (strain L20), this protein is Ribose-5-phosphate isomerase A.